A 242-amino-acid chain; its full sequence is 4-hydroxy-tetrahydrodipicolinate reductase (242 aa).

Residues 79 to 81 and 103 to 106 each bind NAD(+); these read ATT and SANM. The Proton donor/acceptor role is filled by H135. H136 serves as a coordination point for (S)-2,3,4,5-tetrahydrodipicolinate. K139 (proton donor) is an active-site residue. 145 to 146 contacts (S)-2,3,4,5-tetrahydrodipicolinate; that stretch reads GT.

This sequence belongs to the DapB family.

It localises to the cytoplasm. The catalysed reaction is (S)-2,3,4,5-tetrahydrodipicolinate + NAD(+) + H2O = (2S,4S)-4-hydroxy-2,3,4,5-tetrahydrodipicolinate + NADH + H(+). It carries out the reaction (S)-2,3,4,5-tetrahydrodipicolinate + NADP(+) + H2O = (2S,4S)-4-hydroxy-2,3,4,5-tetrahydrodipicolinate + NADPH + H(+). It functions in the pathway amino-acid biosynthesis; L-lysine biosynthesis via DAP pathway; (S)-tetrahydrodipicolinate from L-aspartate: step 4/4. In terms of biological role, catalyzes the conversion of 4-hydroxy-tetrahydrodipicolinate (HTPA) to tetrahydrodipicolinate. This is 4-hydroxy-tetrahydrodipicolinate reductase from Staphylococcus carnosus (strain TM300).